The chain runs to 706 residues: D-(-)-3-hydroxybutyrate oligomer hydrolase (706 aa).

An N-terminal signal peptide occupies residues 1–27; it reads MTIIIAGKNTLTLTSLAAAVLALGACG. S311 (charge relay system) is an active-site residue.

This sequence belongs to the D-(-)-3-hydroxybutyrate oligomer hydrolase family.

It is found in the secreted. It catalyses the reaction (3R)-hydroxybutanoate dimer + H2O = 2 (R)-3-hydroxybutanoate + H(+). Its pathway is lipid metabolism; butanoate metabolism. In terms of biological role, participates in the degradation of poly-3-hydroxybutyrate (PHB). It works downstream of poly(3-hydroxybutyrate) depolymerase, hydrolyzing D(-)-3-hydroxybutyrate oligomers of various length (3HB-oligomers) into 3HB-monomers. The sequence is that of D-(-)-3-hydroxybutyrate oligomer hydrolase from Polaromonas naphthalenivorans (strain CJ2).